We begin with the raw amino-acid sequence, 303 residues long: Probable cell division protein WhiA (303 aa).

A DNA-binding region (H-T-H motif) is located at residues 272–303; it reads SIQQLADSLSTPLTKSGVNHRLRKINKIADEL.

Belongs to the WhiA family.

Functionally, involved in cell division and chromosome segregation. The polypeptide is Probable cell division protein WhiA (Streptococcus pneumoniae (strain Hungary19A-6)).